The following is a 380-amino-acid chain: tRNA-specific 2-thiouridylase MnmA (380 aa).

ATP contacts are provided by residues 9–16 (GVSGGVDS) and Met35. Positions 94 to 96 (NPD) are interaction with target base in tRNA. Cys99 serves as the catalytic Nucleophile. A disulfide bridge connects residues Cys99 and Cys195. Residue Gly123 participates in ATP binding. The interaction with tRNA stretch occupies residues 145 to 147 (KDQ). Cys195 acts as the Cysteine persulfide intermediate in catalysis. The tract at residues 308 to 309 (RY) is interaction with tRNA.

This sequence belongs to the MnmA/TRMU family.

Its subcellular location is the cytoplasm. It catalyses the reaction S-sulfanyl-L-cysteinyl-[protein] + uridine(34) in tRNA + AH2 + ATP = 2-thiouridine(34) in tRNA + L-cysteinyl-[protein] + A + AMP + diphosphate + H(+). Catalyzes the 2-thiolation of uridine at the wobble position (U34) of tRNA, leading to the formation of s(2)U34. In Stenotrophomonas maltophilia (strain R551-3), this protein is tRNA-specific 2-thiouridylase MnmA.